Here is a 365-residue protein sequence, read N- to C-terminus: Patr class I histocompatibility antigen, A-126 alpha chain (365 aa).

The signal sequence occupies residues 1–24 (MAVMAPRTLVLLLSGALALTQTWA). The interval 25 to 114 (GSHSMRYFST…LRGYYNQSED (90 aa)) is alpha-1. The Extracellular portion of the chain corresponds to 25 to 308 (GSHSMRYFST…EPSSQPTIPI (284 aa)). A glycan (N-linked (GlcNAc...) asparagine) is linked at N110. Residues 115 to 206 (GSHTIQLMFG…ENGKETLQRT (92 aa)) are alpha-2. Disulfide bonds link C125–C188 and C227–C283. Residues 207–298 (DPPKTHMTHH…GLPKPLTLRW (92 aa)) are alpha-3. Residues 209 to 295 (PKTHMTHHPI…QHEGLPKPLT (87 aa)) enclose the Ig-like C1-type domain. The interval 299–308 (EPSSQPTIPI) is connecting peptide. Residues 309–332 (VGIIAGLVLLGAVITGAVVAAVMW) form a helical membrane-spanning segment. Residues 333–365 (RRKSSDRKGGSYSQAASSDSAQGSDVSLTACKV) lie on the Cytoplasmic side of the membrane. The disordered stretch occupies residues 338 to 365 (DRKGGSYSQAASSDSAQGSDVSLTACKV). Residues 342-359 (GSYSQAASSDSAQGSDVS) show a composition bias toward low complexity. At S343 the chain carries Phosphoserine. Y344 is subject to Phosphotyrosine. A phosphoserine mark is found at S345, S349, S352, S356, and S359.

It belongs to the MHC class I family. In terms of assembly, heterodimer of an alpha chain and a beta chain (beta-2-microglobulin).

It is found in the membrane. Its function is as follows. Involved in the presentation of foreign antigens to the immune system. This Pan troglodytes (Chimpanzee) protein is Patr class I histocompatibility antigen, A-126 alpha chain (Patr-A).